The primary structure comprises 248 residues: ATP synthase subunit a, chloroplastic (248 aa).

Helical transmembrane passes span 38 to 58 (QVLITSWIVIAVLLGSATIAV), 96 to 116 (VPFIGTMFLFIFVSNWSGALL), 135 to 155 (INTTVALALLTSVAYFYAGLA), 200 to 220 (LVVAVLVSPVPLVVPIPVMFL), and 221 to 241 (GLFTSGIQALIFATLAAAYIG).

The protein belongs to the ATPase A chain family. As to quaternary structure, F-type ATPases have 2 components, CF(1) - the catalytic core - and CF(0) - the membrane proton channel. CF(1) has five subunits: alpha(3), beta(3), gamma(1), delta(1), epsilon(1). CF(0) has four main subunits: a, b, b' and c.

The protein localises to the plastid. The protein resides in the chloroplast thylakoid membrane. Key component of the proton channel; it plays a direct role in the translocation of protons across the membrane. The protein is ATP synthase subunit a, chloroplastic of Pinus koraiensis (Korean pine).